The following is a 343-amino-acid chain: Small ribosomal subunit biogenesis GTPase RsgA (343 aa).

The 160-residue stretch at 116-275 (RGQLKPVAAN…LIDSPGIREF (160 aa)) folds into the CP-type G domain. GTP-binding positions include 163-166 (NKAD) and 217-225 (GQSGVGKSS). Residues Cys-299, Cys-304, His-306, and Cys-312 each contribute to the Zn(2+) site.

It belongs to the TRAFAC class YlqF/YawG GTPase family. RsgA subfamily. As to quaternary structure, monomer. Associates with 30S ribosomal subunit, binds 16S rRNA. Zn(2+) is required as a cofactor.

The protein localises to the cytoplasm. One of several proteins that assist in the late maturation steps of the functional core of the 30S ribosomal subunit. Helps release RbfA from mature subunits. May play a role in the assembly of ribosomal proteins into the subunit. Circularly permuted GTPase that catalyzes slow GTP hydrolysis, GTPase activity is stimulated by the 30S ribosomal subunit. In Pseudomonas syringae pv. syringae (strain B728a), this protein is Small ribosomal subunit biogenesis GTPase RsgA.